A 329-amino-acid chain; its full sequence is DNA-directed RNA polymerase subunit alpha (329 aa).

The interval 1-234 is alpha N-terminal domain (alpha-NTD); the sequence is MQGSVTEFLK…EQLDAFVELR (234 aa). Residues 248-329 are alpha C-terminal domain (alpha-CTD); sequence FDPILLRPVD…WPPASLVDDL (82 aa).

This sequence belongs to the RNA polymerase alpha chain family. In terms of assembly, homodimer. The RNAP catalytic core consists of 2 alpha, 1 beta, 1 beta' and 1 omega subunit. When a sigma factor is associated with the core the holoenzyme is formed, which can initiate transcription.

The enzyme catalyses RNA(n) + a ribonucleoside 5'-triphosphate = RNA(n+1) + diphosphate. DNA-dependent RNA polymerase catalyzes the transcription of DNA into RNA using the four ribonucleoside triphosphates as substrates. This Shewanella denitrificans (strain OS217 / ATCC BAA-1090 / DSM 15013) protein is DNA-directed RNA polymerase subunit alpha.